The following is a 246-amino-acid chain: Cytochrome c oxidase subunit 2 (246 aa).

Helical transmembrane passes span 31–51 (HMMY…YVMM) and 72–92 (IMWT…SFML). Residues His175, Cys210, Glu212, Cys214, His218, and Met221 each contribute to the Cu cation site. Glu212 provides a ligand contact to Mg(2+).

This sequence belongs to the cytochrome c oxidase subunit 2 family. In terms of assembly, component of the cytochrome c oxidase (complex IV, CIV), a multisubunit enzyme composed of a catalytic core of 3 subunits and several supernumerary subunits. The complex exists as a monomer or a dimer and forms supercomplexes (SCs) in the inner mitochondrial membrane with ubiquinol-cytochrome c oxidoreductase (cytochrome b-c1 complex, complex III, CIII). Cu cation serves as cofactor.

It localises to the mitochondrion inner membrane. It catalyses the reaction 4 Fe(II)-[cytochrome c] + O2 + 8 H(+)(in) = 4 Fe(III)-[cytochrome c] + 2 H2O + 4 H(+)(out). In terms of biological role, component of the cytochrome c oxidase, the last enzyme in the mitochondrial electron transport chain which drives oxidative phosphorylation. The respiratory chain contains 3 multisubunit complexes succinate dehydrogenase (complex II, CII), ubiquinol-cytochrome c oxidoreductase (cytochrome b-c1 complex, complex III, CIII) and cytochrome c oxidase (complex IV, CIV), that cooperate to transfer electrons derived from NADH and succinate to molecular oxygen, creating an electrochemical gradient over the inner membrane that drives transmembrane transport and the ATP synthase. Cytochrome c oxidase is the component of the respiratory chain that catalyzes the reduction of oxygen to water. Electrons originating from reduced cytochrome c in the intermembrane space (IMS) are transferred via the dinuclear copper A center (CU(A)) of subunit 2 and heme A of subunit 1 to the active site in subunit 1, a binuclear center (BNC) formed by heme A3 and copper B (CU(B)). The BNC reduces molecular oxygen to 2 water molecules using 4 electrons from cytochrome c in the IMS and 4 protons from the mitochondrial matrix. The chain is Cytochrome c oxidase subunit 2 (COX2) from Debaryomyces hansenii (strain ATCC 36239 / CBS 767 / BCRC 21394 / JCM 1990 / NBRC 0083 / IGC 2968) (Yeast).